The chain runs to 766 residues: Alpha-onocerin synthase LCD (766 aa).

PFTB repeat units lie at residues 101-143 (LCRA…GALD), 151-192 (QREI…RLMG), 456-507 (QESY…STTD), 517-558 (IHEC…PGYK), 594-634 (IQEG…LASG), 643-684 (IQRA…HVVH), and 705-752 (LHRA…WALG). The active-site Proton donor is the Asp-488.

Belongs to the terpene cyclase/mutase family.

It carries out the reaction pre-alpha-onocerin = alpha-onocerin. Its pathway is secondary metabolite biosynthesis; terpenoid biosynthesis. In terms of biological role, oxidosqualene cyclase involved in the biosynthesis of alpha-onocerin, a triterpenoid characterized by a symmetrical structure due to cyclizations at both termini of dioxidosqualene that inhibits acetylcholinesterase. Catalyzes the second half of the cyclization, exclusively from pre-alpha-onocerin. The sequence is that of Alpha-onocerin synthase LCD from Lycopodium clavatum (Stag's-horn clubmoss).